The chain runs to 474 residues: Viral protein TPX (474 aa).

Positions 268–474 (VTVTPISSPS…TPTSTTSSNI (207 aa)) are disordered. The span at 275 to 365 (SPSPTPTPTP…PTPTPTPTPT (91 aa)) shows a compositional bias: pro residues. The Thr-Pro(N) repeat unit spans residues 278–367 (PTPTPTPTPT…PTPTPTPTPT (90 aa)). Residues 278 to 467 (PTPTPTPTPT…PTPTPTPTPT (190 aa)) form a 3 Thr-Pro repeats regions and two near identical repeats region. Residues 368–377 (YDITYVVFDV) constitute a repeat. The Thr-Pro(N) repeat unit spans residues 378-436 (TPSPTPTPTPTPTPTPTPTPTPTPTPTPTPTPTPTPTPTPTPTPTPTPTPTPTPTPTPT). A compositionally biased stretch (pro residues) spans 380–434 (SPTPTPTPTPTPTPTPTPTPTPTPTPTPTPTPTPTPTPTPTPTPTPTPTPTPTPT). The stretch at residues 437–446 (YDITYVIFDV) is a repeat. Residues 447 to 467 (TPSPTPTPTPTPTPTPTPTPT) form a Thr-Pro(N) repeat. The span at 449–465 (SPTPTPTPTPTPTPTPT) shows a compositional bias: pro residues.

The chain is Viral protein TPX from Thermoproteus tenax virus 1 (strain VT3) (TTV1).